Consider the following 218-residue polypeptide: N-(5'-phosphoribosyl)anthranilate isomerase (218 aa).

It belongs to the TrpF family.

The catalysed reaction is N-(5-phospho-beta-D-ribosyl)anthranilate = 1-(2-carboxyphenylamino)-1-deoxy-D-ribulose 5-phosphate. Its pathway is amino-acid biosynthesis; L-tryptophan biosynthesis; L-tryptophan from chorismate: step 3/5. This is N-(5'-phosphoribosyl)anthranilate isomerase from Rhodospirillum rubrum (strain ATCC 11170 / ATH 1.1.1 / DSM 467 / LMG 4362 / NCIMB 8255 / S1).